The primary structure comprises 305 residues: Ribosomal RNA large subunit methyltransferase F (305 aa).

Belongs to the methyltransferase superfamily. METTL16/RlmF family.

It localises to the cytoplasm. The enzyme catalyses adenosine(1618) in 23S rRNA + S-adenosyl-L-methionine = N(6)-methyladenosine(1618) in 23S rRNA + S-adenosyl-L-homocysteine + H(+). Functionally, specifically methylates the adenine in position 1618 of 23S rRNA. In Bacteroides fragilis (strain YCH46), this protein is Ribosomal RNA large subunit methyltransferase F.